We begin with the raw amino-acid sequence, 4367 residues long: Guanylate cyclase (4367 aa).

The span at 1–10 shows a compositional bias: polar residues; the sequence is MKKTRTTAAE. Residues 1-70 form a disordered region; that stretch reads MKKTRTTAAE…MSFLQGKHQQ (70 aa). Residues 1–150 lie on the Cytoplasmic side of the membrane; the sequence is MKKTRTTAAE…FKNLWEQFHR (150 aa). The segment covering 19-33 has biased composition (basic and acidic residues); it reads PHDEHRGRGREHGGA. Polar residues predominate over residues 54–63; that stretch reads HQATQKQMSF. The helical transmembrane segment at 151 to 171 threads the bilayer; it reads VINWWFLVMAIIQAIPQLHYN. At 172–174 the chain is on the extracellular side; sequence PNH. The helical transmembrane segment at 175–195 threads the bilayer; that stretch reads AWSTALPFAIVLVFGMLKDAF. Over 196 to 373 the chain is Cytoplasmic; sequence TDLGRRERDR…GFKRPHIEKD (178 aa). Residues 374–394 traverse the membrane as a helical segment; that stretch reads INTYLFISFFIVFLTILISVM. Residues 395-452 are Extracellular-facing; it reads SKWSVQERDSGDTGVTDAGASSGSGSSSGETSQTYGSSVEFMLGSRDLLQNPWMSILR. Residues 402-426 are disordered; sequence RDSGDTGVTDAGASSGSGSSSGETS. Positions 407-426 are enriched in low complexity; the sequence is TGVTDAGASSGSGSSSGETS. The chain crosses the membrane as a helical span at residues 453–473; it reads FLAVYAPVLPLSLPLILDVVY. Residues 474–2258 lie on the Cytoplasmic side of the membrane; that stretch reads LLQSVLIEGD…VHGRLSLMRV (1785 aa). Disordered regions lie at residues 486–535, 550–699, 831–918, 932–966, 980–1047, 1079–1164, 1344–1593, 1607–1652, 1773–1861, and 1881–1946; these read IRGG…QQPL, SEKF…ISGR, ETSA…ASSL, RLEE…PQLA, VGIQ…GELS, GMSF…MPAV, PSGT…SLKS, FRRG…TGTG, GGRG…GLRS, and DKQH…PQHL. Polar residues predominate over residues 523–535; it reads AHSSQNASLQQPL. 2 stretches are compositionally biased toward basic and acidic residues: residues 605-628 and 670-679; these read ETLR…REQL and RRSDDRDRKS. Low complexity predominate over residues 850–863; that stretch reads SAASSRSQSAPASA. A compositionally biased stretch (polar residues) spans 880 to 892; sequence QTLTNQQTGQQSP. Over residues 906 to 917 the composition is skewed to low complexity; sequence ASPGAADSPASS. A compositionally biased stretch (basic and acidic residues) spans 932–948; sequence RLEETGSQKEEDSRSDR. Over residues 983–996 the composition is skewed to low complexity; sequence QSQHSSQSLLSSRQ. Positions 1025-1047 are enriched in basic and acidic residues; sequence DRMYSRDYHRESRSSSPRDGELS. Composition is skewed to polar residues over residues 1084–1094 and 1117–1130; these read SRPSSQFTFSS and RSLT…TASP. Low complexity predominate over residues 1344–1357; sequence PSGTSASSGAPSGP. Composition is skewed to gly residues over residues 1370–1381 and 1389–1400; these read QGQGHGSLGAPG and CLGGAGGSGARG. Over residues 1443–1454 the composition is skewed to pro residues; it reads VPSPRPLSPAGP. The span at 1527-1542 shows a compositional bias: basic and acidic residues; it reads SFKEKHEEFAFSKDED. The span at 1543-1567 shows a compositional bias: acidic residues; that stretch reads TATVDQDDTQSATDEEHDVEGEEEE. Positions 1583–1593 are enriched in low complexity; it reads SASASLMSLKS. Composition is skewed to polar residues over residues 1628–1652, 1779–1791, and 1843–1852; these read GRSS…TGTG, VSLS…SSAK, and VNPSGQTYSQ. The segment covering 1881-1922 has biased composition (basic and acidic residues); sequence DKQHQRGHGPEGDEGSHELEGHDAHTGDSHGGHHRDQAEPRA. The span at 1933-1942 shows a compositional bias: polar residues; that stretch reads RLPQKTQNRL. Residues 2259–2279 form a helical membrane-spanning segment; that stretch reads STVILWSFFKSLCIGLPTFLF. The Extracellular segment spans residues 2280–2289; sequence QPQAFWSAVE. The helical transmembrane segment at 2290-2310 threads the bilayer; the sequence is VYDPLLLMIVDFFWTTLPGII. The Cytoplasmic portion of the chain corresponds to 2311–2343; sequence HGYSDQDLPTHLLPSVPVLYTPGRRRLYFNGFR. Residues 2344–2364 form a helical membrane-spanning segment; that stretch reads FILWTVEGIIYSFLIFYLLQA. Residues 2365 to 2376 lie on the Extracellular side of the membrane; sequence TWMDGNTFHDGQ. The chain crosses the membrane as a helical span at residues 2377–2397; sequence VLGFHSYGILLLFGSLLQSNV. Residues 2398 to 2408 are Cytoplasmic-facing; it reads RIILETSLWTP. A helical membrane pass occupies residues 2409-2429; it reads TFLFTTIVLCTIMFFPTVLLY. At 2430 to 2444 the chain is on the extracellular side; that stretch reads SVTGWPRRYMELAGR. The helical transmembrane segment at 2445-2465 threads the bilayer; that stretch reads VVFAWPMLYFLIPLWVSIGIL. Residues 2466 to 2724 lie on the Cytoplasmic side of the membrane; the sequence is VQLLLQVFTS…LKRLVPWYRV (259 aa). The chain crosses the membrane as a helical span at residues 2725–2745; it reads IFMLIALYQLLSFLTEYFIDI. The Extracellular portion of the chain corresponds to 2746–2762; it reads HWNPGETEMEPWMCVPT. Residues 2763-2783 traverse the membrane as a helical segment; that stretch reads LVVEIGFAAVVVCTFYDFIFL. Topologically, residues 2784–2785 are cytoplasmic; the sequence is DH. The helical transmembrane segment at 2786 to 2806 threads the bilayer; that stretch reads FSLILNSIVFLMVSSSIVFYT. Topologically, residues 2807–2823 are extracellular; that stretch reads ASHVDGTLTSVLFPVFT. Residues 2824 to 2844 form a helical membrane-spanning segment; the sequence is FVILRISFLQAVVWNILFLIV. Residues 2845–2858 are Cytoplasmic-facing; sequence TVARFMLDKKYLPP. The helical transmembrane segment at 2859-2879 threads the bilayer; the sequence is LNFVHYIPLFIGIDVFVAFVG. At 2880 to 2903 the chain is on the extracellular side; sequence YRLEYNQRKSFLLDYSVDASRRKQ. The helical transmembrane segment at 2904-2924 threads the bilayer; sequence REILNTMLPSFVVDQMINSEL. Residues 2925-3693 are Cytoplasmic-facing; the sequence is NEEGIPTSLK…RTHFYNNKSN (769 aa). The Guanylate cyclase 1 domain occupies 2942 to 3150; sequence SVIFCDVYEF…DTVNTASRMK (209 aa). Disordered stretches follow at residues 3214–3245, 3359–3402, 3456–3475, 3485–3508, 3523–3596, and 3620–3653; these read DVIS…ASSG, GQTE…SRFD, SGDE…EVPL, QARE…HTPT, GCAA…ETEK, and FRRR…VDDE. Residues 3383–3402 are compositionally biased toward basic and acidic residues; that stretch reads RADRRPAGRREDSRGDSRFD. Composition is skewed to basic and acidic residues over residues 3485–3499, 3529–3541, and 3549–3569; these read QARE…KRSG, EEEK…RESE, and TESR…DARE. Low complexity predominate over residues 3626–3637; the sequence is AAPSEAASPSSA. Residues 3694–3714 traverse the membrane as a helical segment; the sequence is INTIEQALIIFLVTFCVQTLT. At 3715–3736 the chain is on the extracellular side; sequence RLALPRFYVVCSHHTINLHVCT. The chain crosses the membrane as a helical span at residues 3737 to 3757; sequence GLYWAVRATYTLAAFVLWMLF. Residues 3758–3772 are Cytoplasmic-facing; sequence HYRNRKEVATCLELR. Residues 3773–3793 form a helical membrane-spanning segment; sequence WMVFLLNLLFISASCVFALSN. The Extracellular segment spans residues 3794–3895; that stretch reads SWGVCGQQQE…GSDLVTANGR (102 aa). The helical transmembrane segment at 3896 to 3916 threads the bilayer; sequence AYTYWLLSDTIELFFYIVILH. The Cytoplasmic segment spans residues 3917 to 3921; the sequence is HNTGL. Residues 3922 to 3942 form a helical membrane-spanning segment; it reads LFQNCILVDVLLMTMSLTFII. The Extracellular segment spans residues 3943–3950; it reads TTARETAS. A helical transmembrane segment spans residues 3951–3971; that stretch reads TVSTIATFPCYVFFNLVSAYC. At 3972–4367 the chain is on the cytoplasmic side; that stretch reads KEYIDRLTFY…GSTPGSALGS (396 aa). Residues 4024–4159 enclose the Guanylate cyclase 2 domain; the sequence is TFLFADICGF…MDVLTGNMME (136 aa). The Mg(2+) site is built by D4029, I4030, and D4073. The interval 4292–4367 is disordered; that stretch reads ASHGDSGPSD…GSTPGSALGS (76 aa). The segment covering 4333–4344 has biased composition (basic and acidic residues); it reads DGLKQLRKEIER. The span at 4356 to 4367 shows a compositional bias: polar residues; that stretch reads DIGSTPGSALGS.

In the N-terminal section; belongs to the cation transport ATPase (P-type) (TC 3.A.3) family. Type IV subfamily. This sequence in the C-terminal section; belongs to the adenylyl cyclase class-4/guanylyl cyclase family. In terms of assembly, interacts with chaperone CDC50.1; the interaction regulates guanylate cyclase GC trafficking and sensing environmental changes. Interacts with UGO; the interaction regulates guanylate cyclase GC trafficking and catalytic activity. It depends on Mg(2+) as a cofactor. Mn(2+) is required as a cofactor.

Its subcellular location is the cell membrane. It catalyses the reaction GTP = 3',5'-cyclic GMP + diphosphate. In terms of biological role, catalyzes the synthesis of the second messenger cGMP from GTP. During the tachyzoite lytic growth cycle in host cells, detects and transduces environmental changes in potassium, phosphatidic acid and pH levels. By producing cGMP in response to these environmental changes, activates PKG and thereby regulates PKG-dependent microneme secretion which is essential for tachyzoite motility, host cell attachment invasion of and egress from host cells. May play a role in the fission of connected tachyzoites at their basal pole during egress. Does not display flippase activity towards phosphatidylserine, phosphatidic acid or phosphatidylcholine. The chain is Guanylate cyclase from Toxoplasma gondii (strain ATCC 50853 / GT1).